The chain runs to 249 residues: tRNA pseudouridine synthase A (249 aa).

Asp-53 (nucleophile) is an active-site residue. Tyr-111 is a binding site for substrate.

The protein belongs to the tRNA pseudouridine synthase TruA family. In terms of assembly, homodimer.

The catalysed reaction is uridine(38/39/40) in tRNA = pseudouridine(38/39/40) in tRNA. Formation of pseudouridine at positions 38, 39 and 40 in the anticodon stem and loop of transfer RNAs. This is tRNA pseudouridine synthase A from Streptococcus suis (strain 05ZYH33).